A 308-amino-acid chain; its full sequence is Nodulation protein D 1 (308 aa).

In terms of domain architecture, HTH lysR-type spans 6–63 (LDLNLLVALDALMTERKLTAAARRINLSQPAMSAAIARLRTYFGDELFSMQGRELIPT). Positions 23–42 (LTAAARRINLSQPAMSAAIA) form a DNA-binding region, H-T-H motif.

This sequence belongs to the LysR transcriptional regulatory family.

NodD regulates the expression of the nodABCFE genes which encode other nodulation proteins. NodD is also a negative regulator of its own expression. Binds flavonoids as inducers. The protein is Nodulation protein D 1 (nodD1) of Rhizobium meliloti (strain 1021) (Ensifer meliloti).